Reading from the N-terminus, the 193-residue chain is Putative manganese efflux pump MntP (193 aa).

The next 6 membrane-spanning stretches (helical) occupy residues 8–28, 37–57, 61–81, 109–129, 138–158, and 172–192; these read LLAIGLAMDCFAVSIASGIIL, LVMALAFGLFQALMPFIGWMF, FSHLIESVDHWIAFAILAFLG, MAIATSIDALAIGISFALLGI, PILIIGFVSFVMSLIGLYFGI, and LWGGIILVAIGLKILIEHLFL.

Belongs to the MntP (TC 9.B.29) family.

It is found in the cell inner membrane. Functionally, probably functions as a manganese efflux pump. The chain is Putative manganese efflux pump MntP from Bacteroides thetaiotaomicron (strain ATCC 29148 / DSM 2079 / JCM 5827 / CCUG 10774 / NCTC 10582 / VPI-5482 / E50).